Reading from the N-terminus, the 318-residue chain is Polyprenal reductase (318 aa).

Residues 1-19 (MAPWAAAQLWALNPLRALW) lie on the Cytoplasmic side of the membrane. A helical membrane pass occupies residues 20–40 (LTLAAAFLLTLLLQLVPPGLL). Over 41-80 (PGCALFQDLIRYGKTKREGQSRPAVCRVFDVPKRYFSHFY) the chain is Lumenal. Residues 81 to 101 (IISALWNGFLLWHLTQSVFLG) traverse the membrane as a helical segment. The Cytoplasmic portion of the chain corresponds to 102–119 (VPFPNWLHGLLRILGASQ). The helical transmembrane segment at 120 to 140 (FQGGELALSAFLVLVFLWLHS) threads the bilayer. Residues 141–156 (LRRLFECFYVSVFSNT) lie on the Lumenal side of the membrane. The helical transmembrane segment at 157–177 (VIHIVQYCFGLVYYVLTGLTV) threads the bilayer. The Cytoplasmic portion of the chain corresponds to 178 to 194 (LSQVPMDGRNAYVIGKN). Residues 195–215 (LLMQARWFHILGMLMFIWSSV) form a helical membrane-spanning segment. Over 216 to 265 (HQYKCHVILGNLRKNKAGVVIHCNHRIPFGDWFEYVSSPNYLAELMIYIS) the chain is Lumenal. A helical membrane pass occupies residues 266–286 (MAVTFGFHNLTWWLVVTYVFF). Topologically, residues 287-318 (SQALSAFLSHKFYKSKFVSYPKHRKAFLPFLF) are cytoplasmic.

Belongs to the steroid 5-alpha reductase family. Polyprenal reductase subfamily.

The protein resides in the endoplasmic reticulum membrane. It carries out the reaction a di-trans,poly-cis-dolichal + NADP(+) = a di-trans,poly-cis-polyprenal + NADPH + H(+). The enzyme catalyses a 3-oxo-5alpha-steroid + NADP(+) = a 3-oxo-Delta(4)-steroid + NADPH + H(+). It catalyses the reaction androst-4-ene-3,17-dione + NADPH + H(+) = 5alpha-androstan-3,17-dione + NADP(+). The catalysed reaction is 17beta-hydroxy-5alpha-androstan-3-one + NADP(+) = testosterone + NADPH + H(+). It functions in the pathway protein modification; protein glycosylation. Its function is as follows. Plays a key role in early steps of protein N-linked glycosylation by being involved in the conversion of polyprenol into dolichol. Acts as a polyprenal reductase that mediates the reduction of polyprenal into dolichal in a NADP-dependent mechanism. Dolichols are required for the synthesis of dolichol-linked monosaccharides and the oligosaccharide precursor used for N-glycosylation. Also able to convert testosterone (T) into 5-alpha-dihydrotestosterone (DHT). This Ailuropoda melanoleuca (Giant panda) protein is Polyprenal reductase (SRD5A3).